The sequence spans 196 residues: ATP-dependent Clp protease proteolytic subunit (196 aa).

S98 serves as the catalytic Nucleophile. H123 is a catalytic residue.

This sequence belongs to the peptidase S14 family. Fourteen ClpP subunits assemble into 2 heptameric rings which stack back to back to give a disk-like structure with a central cavity, resembling the structure of eukaryotic proteasomes.

It is found in the cytoplasm. The enzyme catalyses Hydrolysis of proteins to small peptides in the presence of ATP and magnesium. alpha-casein is the usual test substrate. In the absence of ATP, only oligopeptides shorter than five residues are hydrolyzed (such as succinyl-Leu-Tyr-|-NHMec, and Leu-Tyr-Leu-|-Tyr-Trp, in which cleavage of the -Tyr-|-Leu- and -Tyr-|-Trp bonds also occurs).. In terms of biological role, cleaves peptides in various proteins in a process that requires ATP hydrolysis. Has a chymotrypsin-like activity. Plays a major role in the degradation of misfolded proteins. This is ATP-dependent Clp protease proteolytic subunit from Anoxybacillus flavithermus (strain DSM 21510 / WK1).